A 161-amino-acid polypeptide reads, in one-letter code: Regulator of ribonuclease activity A (161 aa).

Belongs to the RraA family. In terms of assembly, homotrimer. Binds to both RNA-binding sites in the C-terminal region of Rne and to RhlB.

The protein localises to the cytoplasm. Its function is as follows. Globally modulates RNA abundance by binding to RNase E (Rne) and regulating its endonucleolytic activity. Can modulate Rne action in a substrate-dependent manner by altering the composition of the degradosome. Modulates RNA-binding and helicase activities of the degradosome. The polypeptide is Regulator of ribonuclease activity A (Sodalis glossinidius (strain morsitans)).